We begin with the raw amino-acid sequence, 211 residues long: HTH-type transcriptional repressor FabR (211 aa).

One can recognise an HTH tetR-type domain in the interval 10-70; sequence RTRRSLVEAA…TMVDESGLML (61 aa). Positions 33–52 form a DNA-binding region, H-T-H motif; sequence SLREVAREAGIAPTSFYRHF.

In terms of assembly, homodimer.

It is found in the cytoplasm. Functionally, represses the transcription of fabB, involved in unsaturated fatty acid (UFA) biosynthesis. By controlling UFA production, FabR directly influences the physical properties of the membrane bilayer. The polypeptide is HTH-type transcriptional repressor FabR (Cronobacter sakazakii (strain ATCC BAA-894) (Enterobacter sakazakii)).